The primary structure comprises 502 residues: ATP synthase subunit alpha (502 aa).

169–176 (GDRQTGKT) lines the ATP pocket.

It belongs to the ATPase alpha/beta chains family. F-type ATPases have 2 components, CF(1) - the catalytic core - and CF(0) - the membrane proton channel. CF(1) has five subunits: alpha(3), beta(3), gamma(1), delta(1), epsilon(1). CF(0) has three main subunits: a(1), b(2) and c(9-12). The alpha and beta chains form an alternating ring which encloses part of the gamma chain. CF(1) is attached to CF(0) by a central stalk formed by the gamma and epsilon chains, while a peripheral stalk is formed by the delta and b chains.

The protein localises to the cell membrane. The catalysed reaction is ATP + H2O + 4 H(+)(in) = ADP + phosphate + 5 H(+)(out). In terms of biological role, produces ATP from ADP in the presence of a proton gradient across the membrane. The alpha chain is a regulatory subunit. The protein is ATP synthase subunit alpha of Desulfitobacterium hafniense (strain DSM 10664 / DCB-2).